The chain runs to 292 residues: Carbapenem-hydrolyzing beta-lactamase transcriptional activator (292 aa).

An HTH lysR-type domain is found at 5 to 62; that stretch reads IPLNALRAFEASARYLNFTKAGLELHVSQAAVSQHVRTLEAILGVNLFKRLPRGLQLT. Residues 22-41 constitute a DNA-binding region (H-T-H motif); sequence FTKAGLELHVSQAAVSQHVR.

Belongs to the LysR transcriptional regulatory family.

Functionally, this protein is a positive regulator of gene expression of carbapenem-hydrolyzing beta-lactamase (smeA). Seems to also be a repressor of its own transcription. This chain is Carbapenem-hydrolyzing beta-lactamase transcriptional activator (smeR), found in Serratia marcescens.